A 212-amino-acid chain; its full sequence is Probable 2-dehydro-3-deoxy-6-phosphogalactonate aldolase (212 aa).

A 2-dehydro-3-deoxy-6-phospho-D-galactonate-binding site is contributed by Arg18. The active-site Proton donor/acceptor is Glu41. 2-dehydro-3-deoxy-6-phospho-D-galactonate is bound by residues Thr70, Lys130, Gly160, Gly180, and Ser181. Catalysis depends on Lys130, which acts as the Schiff-base intermediate with substrate.

This sequence belongs to the KHG/KDPG aldolase family. In terms of assembly, homotrimer.

The enzyme catalyses 2-dehydro-3-deoxy-6-phospho-D-galactonate = D-glyceraldehyde 3-phosphate + pyruvate. It functions in the pathway carbohydrate acid metabolism; D-galactonate degradation; D-glyceraldehyde 3-phosphate and pyruvate from D-galactonate: step 3/3. Its function is as follows. Involved in the degradation of galactose via the DeLey-Doudoroff pathway. Catalyzes the reversible, stereospecific retro-aldol cleavage of 2-keto-3-deoxy-6-phosphogalactonate (KDPGal) to pyruvate and D-glyceraldehyde-3-phosphate. This chain is Probable 2-dehydro-3-deoxy-6-phosphogalactonate aldolase (dgoA), found in Rhizobium meliloti (strain 1021) (Ensifer meliloti).